Here is an 890-residue protein sequence, read N- to C-terminus: DNA mismatch repair protein MutS (890 aa).

Residue 645-652 coordinates ATP; the sequence is GPNMAGKS.

The protein belongs to the DNA mismatch repair MutS family.

This protein is involved in the repair of mismatches in DNA. It is possible that it carries out the mismatch recognition step. This protein has a weak ATPase activity. In Rickettsia conorii (strain ATCC VR-613 / Malish 7), this protein is DNA mismatch repair protein MutS.